Consider the following 435-residue polypeptide: Enolase (435 aa).

Q167 contributes to the (2R)-2-phosphoglycerate binding site. The active-site Proton donor is E209. Mg(2+) is bound by residues D246, E291, and D318. (2R)-2-phosphoglycerate contacts are provided by K343, R372, S373, and K394. The active-site Proton acceptor is the K343.

Belongs to the enolase family. As to quaternary structure, component of the RNA degradosome, a multiprotein complex involved in RNA processing and mRNA degradation. Mg(2+) is required as a cofactor.

The protein localises to the cytoplasm. Its subcellular location is the secreted. The protein resides in the cell surface. The enzyme catalyses (2R)-2-phosphoglycerate = phosphoenolpyruvate + H2O. Its pathway is carbohydrate degradation; glycolysis; pyruvate from D-glyceraldehyde 3-phosphate: step 4/5. In terms of biological role, catalyzes the reversible conversion of 2-phosphoglycerate (2-PG) into phosphoenolpyruvate (PEP). It is essential for the degradation of carbohydrates via glycolysis. The protein is Enolase of Psychromonas ingrahamii (strain DSM 17664 / CCUG 51855 / 37).